The primary structure comprises 128 residues: Sulfurtransferase TusD (128 aa).

Cysteine 78 acts as the Cysteine persulfide intermediate in catalysis.

This sequence belongs to the DsrE/TusD family. Heterohexamer, formed by a dimer of trimers. The hexameric TusBCD complex contains 2 copies each of TusB, TusC and TusD. The TusBCD complex interacts with TusE.

The protein localises to the cytoplasm. In terms of biological role, part of a sulfur-relay system required for 2-thiolation of 5-methylaminomethyl-2-thiouridine (mnm(5)s(2)U) at tRNA wobble positions. Accepts sulfur from TusA and transfers it in turn to TusE. In Enterobacter sp. (strain 638), this protein is Sulfurtransferase TusD.